A 611-amino-acid polypeptide reads, in one-letter code: UvrABC system protein C (611 aa).

In terms of domain architecture, GIY-YIG spans 19 to 97 (QRPGVYRMVD…IKELRPRYNV (79 aa)). Residues 207–242 (NQVIEELGARMEAASERLEFEAAAQYRDRIQALQAV) form the UVR domain.

This sequence belongs to the UvrC family. In terms of assembly, interacts with UvrB in an incision complex.

The protein resides in the cytoplasm. Functionally, the UvrABC repair system catalyzes the recognition and processing of DNA lesions. UvrC both incises the 5' and 3' sides of the lesion. The N-terminal half is responsible for the 3' incision and the C-terminal half is responsible for the 5' incision. The chain is UvrABC system protein C from Alkalilimnicola ehrlichii (strain ATCC BAA-1101 / DSM 17681 / MLHE-1).